The primary structure comprises 258 residues: Large ribosomal subunit protein bL28m (258 aa).

The transit peptide at 1 to 21 (MQKIFRPFQLTRGFTSSVKNF) directs the protein to the mitochondrion.

Belongs to the bacterial ribosomal protein bL28 family. In terms of assembly, component of the mitochondrial large ribosomal subunit (mt-LSU). Mature yeast 74S mitochondrial ribosomes consist of a small (37S) and a large (54S) subunit. The 37S small subunit contains a 15S ribosomal RNA (15S mt-rRNA) and 34 different proteins. The 54S large subunit contains a 21S rRNA (21S mt-rRNA) and 46 different proteins.

The protein localises to the mitochondrion. Component of the mitochondrial ribosome (mitoribosome), a dedicated translation machinery responsible for the synthesis of mitochondrial genome-encoded proteins, including at least some of the essential transmembrane subunits of the mitochondrial respiratory chain. The mitoribosomes are attached to the mitochondrial inner membrane and translation products are cotranslationally integrated into the membrane. The chain is Large ribosomal subunit protein bL28m (MRPL24) from Saccharomyces cerevisiae (strain ATCC 204508 / S288c) (Baker's yeast).